The following is a 327-amino-acid chain: tRNA pseudouridine synthase B (327 aa).

Residue aspartate 83 is the Nucleophile of the active site.

Belongs to the pseudouridine synthase TruB family. Type 1 subfamily.

It carries out the reaction uridine(55) in tRNA = pseudouridine(55) in tRNA. Responsible for synthesis of pseudouridine from uracil-55 in the psi GC loop of transfer RNAs. The protein is tRNA pseudouridine synthase B of Mesomycoplasma hyopneumoniae (strain 232) (Mycoplasma hyopneumoniae).